A 284-amino-acid polypeptide reads, in one-letter code: Bifunctional protein FolD (284 aa).

NADP(+) is bound by residues 163-165 (GRS), S188, and I229.

The protein belongs to the tetrahydrofolate dehydrogenase/cyclohydrolase family. In terms of assembly, homodimer.

The enzyme catalyses (6R)-5,10-methylene-5,6,7,8-tetrahydrofolate + NADP(+) = (6R)-5,10-methenyltetrahydrofolate + NADPH. The catalysed reaction is (6R)-5,10-methenyltetrahydrofolate + H2O = (6R)-10-formyltetrahydrofolate + H(+). It participates in one-carbon metabolism; tetrahydrofolate interconversion. Catalyzes the oxidation of 5,10-methylenetetrahydrofolate to 5,10-methenyltetrahydrofolate and then the hydrolysis of 5,10-methenyltetrahydrofolate to 10-formyltetrahydrofolate. The protein is Bifunctional protein FolD of Campylobacter hominis (strain ATCC BAA-381 / DSM 21671 / CCUG 45161 / LMG 19568 / NCTC 13146 / CH001A).